The primary structure comprises 222 residues: Protein CicA (222 aa).

In Caulobacter vibrioides (strain ATCC 19089 / CIP 103742 / CB 15) (Caulobacter crescentus), this protein is Protein CicA (cicA).